Reading from the N-terminus, the 131-residue chain is Antitoxin MqsA (131 aa).

The Zn(2+) site is built by cysteine 3, cysteine 6, cysteine 37, and cysteine 40. The region spanning 74–127 (IVKVRKKLSLTQKEASEIFGGGVNAFSRYEKGNAQPHPSTIKLLRVLDKHPELL) is the HTH cro/C1-type domain. The H-T-H motif DNA-binding region spans 85-104 (QKEASEIFGGGVNAFSRYEK).

As to quaternary structure, homodimer. Crystallizes as a heterotetramer with MqsA, MqsR-MqsA(2)-MqsR. Purifies as a probable heterohexamer of 2 MqsR dimers and 1 MqsA dimer. Binds promoter DNA as a dimer. When the 2 dissociate the MsqR mRNA interferase becomes active. Requires Zn(2+) as cofactor. In terms of processing, degraded in the presence of oxidative stress, maybe by the Lon and/or ClpX proteases.

In terms of biological role, antitoxin component of a type II toxin-antitoxin (TA) system. Labile antitoxin that binds to the MqsR mRNA interferase toxin and neutralizes its endoribonuclease activity. Overexpression prevents MqsR-mediated cessation of cell growth and inhibition of cell proliferation. Initially reported to act as a cotranscription factor with MqsA. Following further experiments, the MqsR-MqsA complex does not bind DNA and all reported data are actually due to a small fraction of free MqsA alone binding DNA. Addition of MqsR to a preformed MqsA-promoter DNA complex causes dissociation of the MqsA-DNA complex, probably causing derepression of MqsA-repressed transcripts. MqsA binds to 2 palindromes in the promoter region of the mqsRA operon activating its transcription. Binds to other promoters, inducing mcbR and spy and repressing cspD among others. Binds to and represses the rpoS promoter, the master stress regulator, resulting in decreased cyclic-di-GMP, reduced stress resistance, increased cell motility and decreased biofilm formation; in these experiments 5 TA systems are missing (lacks MazEF, RelEB, ChpB, YoeB-YefM, YafQ-DinJ). An earlier study showed overexpression alone increases biofilm formation, perhaps by repressing cspD; in these experiments the 5 TA systems are present. Represses the csgD promoter. In the presence of stress, when this protein is degraded, the promoters it represses are derepressed, leading to biofilm formation. This TA system mediates cell growth during bile acid deoxycholate stress by degrading mRNA for probable deoxycholate-binding protein YgiS; bile acid detergents such as deoxycholate are important for host defense against bacterial growth in the gall bladder and duodenum. The polypeptide is Antitoxin MqsA (Escherichia coli (strain K12)).